A 183-amino-acid chain; its full sequence is Inosine/xanthosine triphosphatase (183 aa).

Belongs to the YjjX NTPase family. Homodimer. Requires Mg(2+) as cofactor. Mn(2+) is required as a cofactor.

It carries out the reaction XTP + H2O = XDP + phosphate + H(+). The catalysed reaction is ITP + H2O = IDP + phosphate + H(+). Phosphatase that hydrolyzes non-canonical purine nucleotides such as XTP and ITP to their respective diphosphate derivatives. Probably excludes non-canonical purines from DNA/RNA precursor pool, thus preventing their incorporation into DNA/RNA and avoiding chromosomal lesions. The sequence is that of Inosine/xanthosine triphosphatase from Vibrio cholerae serotype O1 (strain ATCC 39315 / El Tor Inaba N16961).